The following is a 276-amino-acid chain: Small ribosomal subunit protein uS2 (276 aa).

S2 bears the N-acetylserine mark.

Belongs to the universal ribosomal protein uS2 family. As to quaternary structure, component of the small ribosomal subunit. Mature ribosomes consist of a small (40S) and a large (60S) subunit. The 40S subunit contains about 33 different proteins and 1 molecule of RNA (18S). The 60S subunit contains about 49 different proteins and 3 molecules of RNA (28S, 5.8S and 5S). Interacts with rps-21.

The protein localises to the cytoplasm. Required for the assembly and/or stability of the 40S ribosomal subunit. Required for the processing of the 20S rRNA-precursor to mature 18S rRNA in a late step of the maturation of 40S ribosomal subunits. Involved in cold-warm shock-induced translocation of the RNA exosome components from the nucleolus to nucleoplasm. The sequence is that of Small ribosomal subunit protein uS2 from Caenorhabditis elegans.